The following is a 253-amino-acid chain: ER membrane protein complex subunit 3 (253 aa).

The next 3 membrane-spanning stretches (helical) occupy residues 10–30 (WVLL…QYIM), 126–146 (FIPQ…FILM), and 176–196 (SISW…LIGL).

The protein belongs to the EMC3 family. Component of the ER membrane protein complex (EMC), which is composed of EMC1, EMC2, EMC3, EMC4, EMC5 and EMC6.

The protein localises to the endoplasmic reticulum membrane. In terms of biological role, the EMC seems to be required for efficient folding of proteins in the endoplasmic reticulum (ER). This chain is ER membrane protein complex subunit 3 (AIM27), found in Saccharomyces cerevisiae (strain RM11-1a) (Baker's yeast).